The primary structure comprises 421 residues: Testin (421 aa).

The region spanning 92-199 is the PET domain; it reads MILTNPVAAR…GDVKLPCELD (108 aa). The interval 134–164 is disordered; sequence KQPVAGSEGAQYRKKQLAKQLPAHDQDPSKC. A compositionally biased stretch (basic and acidic residues) spans 155–164; that stretch reads PAHDQDPSKC. 3 LIM zinc-binding domains span residues 234–297, 299–359, and 362–421; these read YSCY…CDSE, PRCA…NHAV, and QGCH…KMMS.

This sequence belongs to the prickle / espinas / testin family. Interacts via LIM domain 1 with ZYX. Interacts (via LIM domain 3) with ENAH and VASP. Interacts with ALKBH4, talin, actin, alpha-actinin, GRIP1 and PXN. Interacts (via LIM domain 2) with ACTL7A (via N-terminus). Heterodimer with ACTL7A; the heterodimer interacts with ENAH to form a heterotrimer.

The protein resides in the cytoplasm. It localises to the cell junction. It is found in the focal adhesion. Functionally, scaffold protein that may play a role in cell adhesion, cell spreading and in the reorganization of the actin cytoskeleton. Plays a role in the regulation of cell proliferation. May act as a tumor suppressor. The polypeptide is Testin (TES) (Eulemur macaco macaco (Black lemur)).